The sequence spans 240 residues: Chloroplastic group IIB intron splicing facilitator CRS2-B, chloroplastic (240 aa).

The protein belongs to the PTH family. CRS2 subfamily. In terms of assembly, part of large ribonucleo-protein complexes that include group IIB introns and either CAF1 or CAF2.

Its subcellular location is the plastid. The protein resides in the chloroplast stroma. Required for the splicing of group IIB introns in chloroplasts. The polypeptide is Chloroplastic group IIB intron splicing facilitator CRS2-B, chloroplastic (CRS2B) (Arabidopsis thaliana (Mouse-ear cress)).